A 456-amino-acid polypeptide reads, in one-letter code: Ribulose bisphosphate carboxylase large chain (456 aa).

Position 7 is an N6,N6,N6-trimethyllysine (lysine 7). Asparagine 116 and threonine 166 together coordinate substrate. The active-site Proton acceptor is lysine 168. Lysine 170 serves as a coordination point for substrate. Positions 194, 196, and 197 each coordinate Mg(2+). The residue at position 194 (lysine 194) is an N6-carboxylysine. Histidine 287 (proton acceptor) is an active-site residue. Substrate-binding residues include arginine 288, histidine 320, and serine 372.

It belongs to the RuBisCO large chain family. Type I subfamily. As to quaternary structure, heterohexadecamer of 8 large chains and 8 small chains; disulfide-linked. The disulfide link is formed within the large subunit homodimers. It depends on Mg(2+) as a cofactor. Post-translationally, the disulfide bond which can form in the large chain dimeric partners within the hexadecamer appears to be associated with oxidative stress and protein turnover.

The protein localises to the plastid. It localises to the chloroplast. The catalysed reaction is 2 (2R)-3-phosphoglycerate + 2 H(+) = D-ribulose 1,5-bisphosphate + CO2 + H2O. It carries out the reaction D-ribulose 1,5-bisphosphate + O2 = 2-phosphoglycolate + (2R)-3-phosphoglycerate + 2 H(+). Its function is as follows. RuBisCO catalyzes two reactions: the carboxylation of D-ribulose 1,5-bisphosphate, the primary event in carbon dioxide fixation, as well as the oxidative fragmentation of the pentose substrate in the photorespiration process. Both reactions occur simultaneously and in competition at the same active site. The sequence is that of Ribulose bisphosphate carboxylase large chain from Barnardia japonica (Chinese squill).